The following is a 608-amino-acid chain: 2',5'-phosphodiesterase 12 (608 aa).

The transit peptide at 1 to 16 directs the protein to the mitochondrion; sequence MWRLPGRAALRGVRSV. The disordered stretch occupies residues 91-111; the sequence is AKKSRKNRAHSSGGAACAATG. Residues 100–111 show a composition bias toward low complexity; that stretch reads HSSGGAACAATG. Ser216 carries the phosphoserine modification. Residues Glu350, Asp495, and Asn497 each contribute to the Mg(2+) site. Asp495 acts as the Proton donor/acceptor in catalysis.

This sequence belongs to the CCR4/nocturin family. The cofactor is Mg(2+).

Its subcellular location is the mitochondrion matrix. The catalysed reaction is Exonucleolytic cleavage of poly(A) to 5'-AMP.. In terms of biological role, enzyme that cleaves 2',5'-phosphodiester bond linking adenosines of the 5'-triphosphorylated oligoadenylates, triphosphorylated oligoadenylates referred as 2-5A modulates the 2-5A system. Degrades triphosphorylated 2-5A to produce AMP and ATP. Also cleaves 3',5'-phosphodiester bond of oligoadenylates. Plays a role as a negative regulator of the 2-5A system that is one of the major pathways for antiviral and antitumor functions induced by interferons (IFNs). Suppression of this enzyme increases cellular 2-5A levels and decreases viral replication in cultured small-airway epithelial cells. The protein is 2',5'-phosphodiesterase 12 (Pde12) of Rattus norvegicus (Rat).